Here is a 191-residue protein sequence, read N- to C-terminus: UPF0312 protein Sputw3181_1309 (191 aa).

A signal peptide spans 1 to 22 (MKKQLLSALIGVSLLVPMAASA).

It belongs to the UPF0312 family. Type 1 subfamily.

It localises to the periplasm. The protein is UPF0312 protein Sputw3181_1309 of Shewanella sp. (strain W3-18-1).